The chain runs to 266 residues: MPPPAPLFLSLASTPPPALMPVHHPRAPQSLTLVPPVASSRKAAAVPACPVASPRHSDYFDPRAPPPPRGDGGYGRPPNGAQDGRVFTSYSIYKGKAALSFDPRPPLFVPLDSGAYKVAKEGFVLLQFAPAVATRQYDWTRKQVFSLSVWEIGTLLTLGPTDSCEFFHDPFKGRSEEGKVRKVLKIEPTPDGNGRFFNLSVQNRLINVDESIYIPITKGEFAVIVSTFNYIIPHLMGWSTFVSSIKPEESRPYSRPQSTSEYEWRR.

A chloroplast-targeting transit peptide spans M1–V37. The disordered stretch occupies residues S53 to A81. Residues K94–L99 are required for ssDNA binding. The Nuclear localization signal signature appears at K172 to K185.

It belongs to the Whirly family. As to quaternary structure, homotetramer.

It is found in the plastid. The protein localises to the chloroplast stroma. The protein resides in the nucleus. Functionally, single-stranded DNA and RNA binding protein that maintains plastid genome stability by preventing break-induced and short homology-dependent illegitimate recombinations. Functions in RNA metabolism and is involved in the maturation of the atpF and 23S ribosomal RNAs. The sequence is that of Single-stranded DNA-binding protein WHY1, chloroplastic (WHY1) from Zea mays (Maize).